A 187-amino-acid polypeptide reads, in one-letter code: Elongation factor P (187 aa).

This sequence belongs to the elongation factor P family.

The protein resides in the cytoplasm. The protein operates within protein biosynthesis; polypeptide chain elongation. Its function is as follows. Involved in peptide bond synthesis. Stimulates efficient translation and peptide-bond synthesis on native or reconstituted 70S ribosomes in vitro. Probably functions indirectly by altering the affinity of the ribosome for aminoacyl-tRNA, thus increasing their reactivity as acceptors for peptidyl transferase. This chain is Elongation factor P, found in Corynebacterium efficiens (strain DSM 44549 / YS-314 / AJ 12310 / JCM 11189 / NBRC 100395).